Here is a 301-residue protein sequence, read N- to C-terminus: Homoserine O-acetyltransferase (301 aa).

The active-site Acyl-thioester intermediate is the cysteine 142. Substrate-binding residues include lysine 163 and serine 192. Histidine 235 functions as the Proton acceptor in the catalytic mechanism. Glutamate 237 is an active-site residue. Arginine 249 is a binding site for substrate.

The protein belongs to the MetA family.

Its subcellular location is the cytoplasm. The catalysed reaction is L-homoserine + acetyl-CoA = O-acetyl-L-homoserine + CoA. The protein operates within amino-acid biosynthesis; L-methionine biosynthesis via de novo pathway; O-acetyl-L-homoserine from L-homoserine: step 1/1. Transfers an acetyl group from acetyl-CoA to L-homoserine, forming acetyl-L-homoserine. The polypeptide is Homoserine O-acetyltransferase (Bacillus mycoides (strain KBAB4) (Bacillus weihenstephanensis)).